Here is a 513-residue protein sequence, read N- to C-terminus: ATP synthase subunit alpha (513 aa).

Residue 169–176 (GDRQTGKT) participates in ATP binding.

Belongs to the ATPase alpha/beta chains family. In terms of assembly, F-type ATPases have 2 components, CF(1) - the catalytic core - and CF(0) - the membrane proton channel. CF(1) has five subunits: alpha(3), beta(3), gamma(1), delta(1), epsilon(1). CF(0) has three main subunits: a(1), b(2) and c(9-12). The alpha and beta chains form an alternating ring which encloses part of the gamma chain. CF(1) is attached to CF(0) by a central stalk formed by the gamma and epsilon chains, while a peripheral stalk is formed by the delta and b chains.

It is found in the cell inner membrane. It carries out the reaction ATP + H2O + 4 H(+)(in) = ADP + phosphate + 5 H(+)(out). Functionally, produces ATP from ADP in the presence of a proton gradient across the membrane. The alpha chain is a regulatory subunit. In Yersinia pseudotuberculosis serotype O:1b (strain IP 31758), this protein is ATP synthase subunit alpha.